Reading from the N-terminus, the 344-residue chain is Biotin synthase (344 aa).

The Radical SAM core domain occupies 40 to 267; sequence AQVQVSTLLS…KSMVRLSAGR (228 aa). The [4Fe-4S] cluster site is built by cysteine 55, cysteine 59, and cysteine 62. Cysteine 99, cysteine 130, cysteine 190, and arginine 262 together coordinate [2Fe-2S] cluster.

This sequence belongs to the radical SAM superfamily. Biotin synthase family. Homodimer. The cofactor is [4Fe-4S] cluster. Requires [2Fe-2S] cluster as cofactor.

It carries out the reaction (4R,5S)-dethiobiotin + (sulfur carrier)-SH + 2 reduced [2Fe-2S]-[ferredoxin] + 2 S-adenosyl-L-methionine = (sulfur carrier)-H + biotin + 2 5'-deoxyadenosine + 2 L-methionine + 2 oxidized [2Fe-2S]-[ferredoxin]. Its pathway is cofactor biosynthesis; biotin biosynthesis; biotin from 7,8-diaminononanoate: step 2/2. In terms of biological role, catalyzes the conversion of dethiobiotin (DTB) to biotin by the insertion of a sulfur atom into dethiobiotin via a radical-based mechanism. This is Biotin synthase from Xanthomonas euvesicatoria pv. vesicatoria (strain 85-10) (Xanthomonas campestris pv. vesicatoria).